The primary structure comprises 350 residues: 4-hydroxythreonine-4-phosphate dehydrogenase (350 aa).

His138 and Thr139 together coordinate substrate. A divalent metal cation is bound by residues His173, His218, and His273. 3 residues coordinate substrate: Lys281, Asn290, and Arg299.

Belongs to the PdxA family. As to quaternary structure, homodimer. The cofactor is Zn(2+). Mg(2+) serves as cofactor. It depends on Co(2+) as a cofactor.

The protein resides in the cytoplasm. It catalyses the reaction 4-(phosphooxy)-L-threonine + NAD(+) = 3-amino-2-oxopropyl phosphate + CO2 + NADH. It participates in cofactor biosynthesis; pyridoxine 5'-phosphate biosynthesis; pyridoxine 5'-phosphate from D-erythrose 4-phosphate: step 4/5. Functionally, catalyzes the NAD(P)-dependent oxidation of 4-(phosphooxy)-L-threonine (HTP) into 2-amino-3-oxo-4-(phosphooxy)butyric acid which spontaneously decarboxylates to form 3-amino-2-oxopropyl phosphate (AHAP). The chain is 4-hydroxythreonine-4-phosphate dehydrogenase from Xanthobacter autotrophicus (strain ATCC BAA-1158 / Py2).